Here is a 160-residue protein sequence, read N- to C-terminus: Ureidoglycolate lyase (160 aa).

Belongs to the ureidoglycolate lyase family. In terms of assembly, homodimer. Ni(2+) is required as a cofactor.

The catalysed reaction is (S)-ureidoglycolate = urea + glyoxylate. It participates in nitrogen metabolism; (S)-allantoin degradation. Its function is as follows. Catalyzes the catabolism of the allantoin degradation intermediate (S)-ureidoglycolate, generating urea and glyoxylate. Involved in the anaerobic utilization of allantoin as sole nitrogen source. Reinforces the induction of genes involved in the degradation of allantoin and glyoxylate by producing glyoxylate. This chain is Ureidoglycolate lyase, found in Escherichia coli (strain SMS-3-5 / SECEC).